Consider the following 60-residue polypeptide: Toxin C10S2C2 (60 aa).

Disulfide bonds link Cys3-Cys22, Cys17-Cys39, Cys41-Cys52, and Cys53-Cys58. The interval 41-48 (CPTAMWPY) is important for binding to L-type calcium channels.

This sequence belongs to the three-finger toxin family. Short-chain subfamily. L-type calcium blocker sub-subfamily. As to expression, expressed by the venom gland.

It localises to the secreted. Functionally, this specific blocker of the L-type calcium channel (Cav1/CACNA1) is a smooth muscle relaxant and an inhibitor of cardiac contractions. This Dendroaspis angusticeps (Eastern green mamba) protein is Toxin C10S2C2.